Here is a 238-residue protein sequence, read N- to C-terminus: DNA damage-regulated autophagy modulator protein 1 (238 aa).

6 helical membrane passes run 9 to 29 (AFVP…SYVV), 53 to 73 (SGIF…TMYT), 91 to 111 (VFNL…GIVA), 116 to 136 (LAVP…GVVY), 161 to 181 (MVIS…ASLI), and 200 to 220 (VSAI…LTFI).

It belongs to the DRAM/TMEM150 family.

It localises to the lysosome membrane. Functionally, lysosomal modulator of autophagy that plays a central role in p53/TP53-mediated apoptosis. Not involved in p73/TP73-mediated autophagy. The chain is DNA damage-regulated autophagy modulator protein 1 (DRAM1) from Homo sapiens (Human).